The primary structure comprises 364 residues: Methylthioribose-1-phosphate isomerase (364 aa).

Substrate contacts are provided by residues 53-55 (RGA), Arg-90, and Gln-203. The active-site Proton donor is Asp-244. Residue 254-255 (NK) coordinates substrate.

The protein belongs to the eIF-2B alpha/beta/delta subunits family. MtnA subfamily.

The catalysed reaction is 5-(methylsulfanyl)-alpha-D-ribose 1-phosphate = 5-(methylsulfanyl)-D-ribulose 1-phosphate. It functions in the pathway amino-acid biosynthesis; L-methionine biosynthesis via salvage pathway; L-methionine from S-methyl-5-thio-alpha-D-ribose 1-phosphate: step 1/6. Catalyzes the interconversion of methylthioribose-1-phosphate (MTR-1-P) into methylthioribulose-1-phosphate (MTRu-1-P). The polypeptide is Methylthioribose-1-phosphate isomerase (Brucella anthropi (strain ATCC 49188 / DSM 6882 / CCUG 24695 / JCM 21032 / LMG 3331 / NBRC 15819 / NCTC 12168 / Alc 37) (Ochrobactrum anthropi)).